Here is a 324-residue protein sequence, read N- to C-terminus: Myb-like DNA-binding protein myb-1 (324 aa).

2 consecutive HTH myb-type domains span residues 4–59 (MPDQ…KPGL) and 60–110 (NHGP…NRKK). The tract at residues 107–231 (NRKKNQLRRQ…PTGSTLRLLT (125 aa)) is disordered. Positions 155-165 (RRPSSPSSFND) are enriched in polar residues. A compositionally biased stretch (basic and acidic residues) spans 166–175 (SLHHRVHESI). Low complexity-rich tracts occupy residues 183-192 (QQQQQQQQQQ) and 222-231 (PTGSTLRLLT).

The protein localises to the nucleus. The chain is Myb-like DNA-binding protein myb-1 (rca-1) from Neurospora crassa (strain ATCC 24698 / 74-OR23-1A / CBS 708.71 / DSM 1257 / FGSC 987).